Reading from the N-terminus, the 282-residue chain is 5'-adenylylsulfate reductase-like 2 (282 aa).

Positions 1–19 (MRWWPALPLLLLAVAVAGA) are cleaved as a signal peptide. Residues 20–159 (GDAAPVCTRP…LAAFYNDVSG (140 aa)) enclose the Thioredoxin domain. Asn134 is a glycosylation site (N-linked (GlcNAc...) asparagine). The chain crosses the membrane as a helical span at residues 205-225 (AASFVILRLLYLFYPKITAFV).

It is found in the membrane. In Oryza sativa subsp. japonica (Rice), this protein is 5'-adenylylsulfate reductase-like 2 (APRL2).